Reading from the N-terminus, the 297-residue chain is Phosphoribosylaminoimidazole-succinocarboxamide synthase (297 aa).

Belongs to the SAICAR synthetase family.

The catalysed reaction is 5-amino-1-(5-phospho-D-ribosyl)imidazole-4-carboxylate + L-aspartate + ATP = (2S)-2-[5-amino-1-(5-phospho-beta-D-ribosyl)imidazole-4-carboxamido]succinate + ADP + phosphate + 2 H(+). It participates in purine metabolism; IMP biosynthesis via de novo pathway; 5-amino-1-(5-phospho-D-ribosyl)imidazole-4-carboxamide from 5-amino-1-(5-phospho-D-ribosyl)imidazole-4-carboxylate: step 1/2. In Mycobacterium tuberculosis (strain ATCC 25177 / H37Ra), this protein is Phosphoribosylaminoimidazole-succinocarboxamide synthase.